Reading from the N-terminus, the 795-residue chain is MATMLEGRCQTQPRSSPSGREASLWSSGFGMKLEAVTPFLGKYRPFVGRCCQTCTPKSWESLFHRSITDLGFCNVILVKEENTRFRGWLVRRLCYFLWSLEQHIPPCQDVPQKIMESTGVQNLLSGRVPGGTGEGQVPDLVKKEVQRILGHIQAPPRPFLVRLFSWALLRFLNCLFLNVQLHKGQMKMVQKAAQAGLPLVLLSTHKTLLDGILLPFMLLSQGLGVLRVAWDSRACSPALRALLRKLGGLFLPPEASLSLDSSEGLLARAVVQAVIEQLLVSGQPLLIFLEEPPGALGPRLSALGQAWVGFVVQAVQVGIVPDALLVPVAVTYDLVPDAPCDIDHASAPLGLWTGALAVLRSLWSRWGCSHRICSRVHLAQPFSLQEYIVSARSCWGGRQTLEQLLQPIVLGQCTAVPDTEKEQEWTPITGPLLALKEEDQLLVRRLSCHVLSASVGSSAVMSTAIMATLLLFKHQKLLGEFSWLTEEILLRGFDVGFSGQLRSLLQHSLSLLRAHVALLRIRQGDLLVVPQPGPGLTHLAQLSAELLPVFLSEAVGACAVRGLLAGRVPPQGPWELQGILLLSQNELYRQILLLMHLLPQDLLLLKPCQSSYCYCQEVLDRLIQCGLLVAEETPGSRPACDTGRQRLSRKLLWKPSGDFTDSDSDDFGEADGRYFRLSQQSHCPDFFLFLCRLLSPLLKAFAQAAAFLRQGQLPDTELGYTEQLFQFLQATAQEEGIFECADPKLAISAVWTFRDLGVLQQTPSPAGPRLHLSPTFASLDNQEKLEQFIRQFICS.

The tract at residues 1-21 (MATMLEGRCQTQPRSSPSGRE) is disordered. The Cytoplasmic portion of the chain corresponds to 1–305 (MATMLEGRCQ…LGPRLSALGQ (305 aa)). Over residues 9–18 (CQTQPRSSPS) the composition is skewed to polar residues. Residues 180–331 (QLHKGQMKMV…DALLVPVAVT (152 aa)) are acyltransferase. Positions 205-210 (HKTLLD) match the HXXXXD motif motif. A helical transmembrane segment spans residues 306-332 (AWVGFVVQAVQVGIVPDALLVPVAVTY). At 333 to 449 (DLVPDAPCDI…QLLVRRLSCH (117 aa)) the chain is on the mitochondrial intermembrane side. A helical membrane pass occupies residues 450–472 (VLSASVGSSAVMSTAIMATLLLF). The Cytoplasmic portion of the chain corresponds to 473-795 (KHQKLLGEFS…EQFIRQFICS (323 aa)). Residue Ser656 is modified to Phosphoserine. Thr660 carries the phosphothreonine modification. A phosphoserine mark is found at Ser662 and Ser664.

Belongs to the GPAT/DAPAT family. Interacts with PIWIL2.

It is found in the mitochondrion outer membrane. It catalyses the reaction sn-glycerol 3-phosphate + an acyl-CoA = a 1-acyl-sn-glycero-3-phosphate + CoA. The enzyme catalyses a 1-acyl-sn-glycero-3-phosphate + an acyl-CoA = a 1,2-diacyl-sn-glycero-3-phosphate + CoA. The catalysed reaction is 1-(9Z-octadecenoyl)-sn-glycero-3-phosphate + (9Z)-octadecenoyl-CoA = 1,2-di-(9Z-octadecenoyl)-sn-glycero-3-phosphate + CoA. It carries out the reaction 1-(9Z-octadecenoyl)-sn-glycero-3-phosphate + (5Z,8Z,11Z,14Z)-eicosatetraenoyl-CoA = 1-(9Z)-octadecenoyl-2-(5Z,8Z,11Z,14Z)-eicosatetraenoyl-sn-glycero-3-phosphate + CoA. It catalyses the reaction (5Z,8Z,11Z,14Z)-eicosatetraenoyl-CoA + sn-glycerol 3-phosphate = 1-(5Z,8Z,11Z,14Z-eicosatetraenoyl)-sn-glycero-3-phosphate + CoA. Its pathway is phospholipid metabolism; CDP-diacylglycerol biosynthesis; CDP-diacylglycerol from sn-glycerol 3-phosphate: step 1/3. Inhibited by N-ethylmaleimide (NEM). In terms of biological role, transfers an acyl-group from acyl-ACP to the sn-1 position of glycerol-3-phosphate producing a lysophosphatidic acid (LPA), an essential step for the triacylglycerol (TAG) and glycerophospholipids. In vitro also transfers an acyl-group from acyl-ACP to the LPA producing a phosphatidic acid (PA). Prefers arachidonoyl-CoA as the acyl donor. Required for primary processing step during piRNA biosynthesis. Molecular mechanisms by which it promotes piRNA biosynthesis are unclear and do not involve its acyltransferase activity. This Homo sapiens (Human) protein is Glycerol-3-phosphate acyltransferase 2, mitochondrial.